A 382-amino-acid polypeptide reads, in one-letter code: MYIVGVMSGTSLDGIDVALVRIEGSGVESKVELIHFTTVPFCNDIKSEIQQALSIENSNVQLICSLNFKLGLCFANAVKEVCKEANFSLEQLDLIGSHGQTIYHQPKQDGNRIPSTLQIGEPAVIAYETNTTVISNFRTMDMAAGGQGAPLVPYSEVILYRDPSKNRLLQNIGGISNVTVIPSQQSDQNVIAFDTGPGNMIIDEVCQRLFQLPYDQNGEIAKQGRVVDEILTYCMSHPFLKMNPPKSTGREQFGEKFVSELLKRFEKHSKENILTTVTMFTVNSIVHHYKKFILPYYEIDEVILGGGGSYNSTLVEMLRNGLKDENCAIFIQEDIGYSSEAKEAIAFAILANETHHRNPSNVPSATGAKQSVVLGNITFPPL.

9–16 (GTSLDGID) contacts ATP.

Belongs to the anhydro-N-acetylmuramic acid kinase family.

It carries out the reaction 1,6-anhydro-N-acetyl-beta-muramate + ATP + H2O = N-acetyl-D-muramate 6-phosphate + ADP + H(+). It participates in amino-sugar metabolism; 1,6-anhydro-N-acetylmuramate degradation. The protein operates within cell wall biogenesis; peptidoglycan recycling. In terms of biological role, catalyzes the specific phosphorylation of 1,6-anhydro-N-acetylmuramic acid (anhMurNAc) with the simultaneous cleavage of the 1,6-anhydro ring, generating MurNAc-6-P. Is required for the utilization of anhMurNAc either imported from the medium or derived from its own cell wall murein, and thus plays a role in cell wall recycling. The chain is Anhydro-N-acetylmuramic acid kinase from Bacillus thuringiensis subsp. konkukian (strain 97-27).